Here is a 257-residue protein sequence, read N- to C-terminus: MPARRPFIGGNFKCNGSLDFIKSHVASIASYKIPESVDVVVAPSFVHLSTAIAANTSKCLKIAAQNVYLEGNGAWTGETSVEMLLDMGLSHVIIGHSERRRIMGETNEQSAKKAKRALDKGMTVIFCTGETLDERKANNTMEVNIAQLEALKKEIGESKKLWENVVIAYEPVWSIGTGVVATPEQAEEVHVGLRKWFAEKVCAEGAQHIRIIYGGSANGSNCEKLGQCPNIDGFLVGGASLKPEFTTMIDILAKTRA.

Residues N11 and K13 each contribute to the substrate site. The active-site Electrophile is the H96. E170 (proton acceptor) is an active-site residue.

This sequence belongs to the triosephosphate isomerase family. As to quaternary structure, homodimer.

The catalysed reaction is D-glyceraldehyde 3-phosphate = dihydroxyacetone phosphate. Its pathway is carbohydrate biosynthesis; gluconeogenesis. It functions in the pathway carbohydrate degradation; glycolysis; D-glyceraldehyde 3-phosphate from glycerone phosphate: step 1/1. The protein is Triosephosphate isomerase of Giardia intestinalis (Giardia lamblia).